A 510-amino-acid chain; its full sequence is Pantetheinase (510 aa).

A signal peptide spans methionine 1–serine 22. Residues tyrosine 31–serine 307 enclose the CN hydrolase domain. Asparagine 39 is a glycosylation site (N-linked (GlcNAc...) asparagine). Glutamate 80 (proton acceptor) is an active-site residue. 2 N-linked (GlcNAc...) asparagine glycosylation sites follow: asparagine 87 and asparagine 147. The Proton donor role is filled by lysine 179. Asparagine 201 carries an N-linked (GlcNAc...) asparagine glycan. Cysteine 212 acts as the Nucleophile in catalysis. Residues asparagine 316 and asparagine 354 are each glycosylated (N-linked (GlcNAc...) asparagine). The GPI-anchor amidated aspartate moiety is linked to residue aspartate 492. The propeptide at leucine 493–lysine 510 is removed in mature form. O-linked (GalNAc...) threonine glycosylation is present at threonine 504.

This sequence belongs to the carbon-nitrogen hydrolase superfamily. BTD/VNN family. Monomer.

It localises to the cell membrane. It catalyses the reaction (R)-pantetheine + H2O = cysteamine + (R)-pantothenate. Functionally, amidohydrolase that hydrolyzes specifically one of the carboamide linkages in D-pantetheine thus recycling pantothenic acid (vitamin B5) and releasing cysteamine. The chain is Pantetheinase (VNN1) from Bos taurus (Bovine).